The primary structure comprises 379 residues: Cytochrome b (379 aa).

The next 4 membrane-spanning stretches (helical) occupy residues 33 to 53 (FGSL…FLAM), 77 to 98 (WLIR…YLHI), 113 to 133 (WNIG…GYVL), and 178 to 198 (FFTF…LHLL). His83 and His97 together coordinate heme b. Heme b contacts are provided by His182 and His196. His201 is a binding site for a ubiquinone. The next 4 helical transmembrane spans lie at 226–246 (YKDL…VLFS), 288–308 (LGGV…PLLH), 320–340 (FSQT…WIGG), and 347–367 (FIII…VVMP).

Belongs to the cytochrome b family. In terms of assembly, the cytochrome bc1 complex contains 3 respiratory subunits (MT-CYB, CYC1 and UQCRFS1), 2 core proteins (UQCRC1 and UQCRC2) and probably 6 low-molecular weight proteins. Heme b is required as a cofactor.

The protein resides in the mitochondrion inner membrane. Its function is as follows. Component of the ubiquinol-cytochrome c reductase complex (complex III or cytochrome b-c1 complex) that is part of the mitochondrial respiratory chain. The b-c1 complex mediates electron transfer from ubiquinol to cytochrome c. Contributes to the generation of a proton gradient across the mitochondrial membrane that is then used for ATP synthesis. The chain is Cytochrome b (MT-CYB) from Iguana iguana (Common iguana).